Here is a 477-residue protein sequence, read N- to C-terminus: Cysteine--tRNA ligase (477 aa).

C29 serves as a coordination point for Zn(2+). Positions 31–41 match the 'HIGH' region motif; it reads PTVYNYFHVGN. The Zn(2+) site is built by C209, H234, and E238. Positions 267-271 match the 'KMSKS' region motif; sequence KMSKS. Residue K270 participates in ATP binding.

This sequence belongs to the class-I aminoacyl-tRNA synthetase family. As to quaternary structure, monomer. The cofactor is Zn(2+).

The protein localises to the cytoplasm. The enzyme catalyses tRNA(Cys) + L-cysteine + ATP = L-cysteinyl-tRNA(Cys) + AMP + diphosphate. The protein is Cysteine--tRNA ligase of Desulfitobacterium hafniense (strain DSM 10664 / DCB-2).